Reading from the N-terminus, the 76-residue chain is Acyl carrier protein (76 aa).

Positions 1–76 constitute a Carrier domain; that stretch reads MSIEERVKKI…SAIDYVQNNQ (76 aa). Serine 36 is subject to O-(pantetheine 4'-phosphoryl)serine.

Belongs to the acyl carrier protein (ACP) family. 4'-phosphopantetheine is transferred from CoA to a specific serine of apo-ACP by AcpS. This modification is essential for activity because fatty acids are bound in thioester linkage to the sulfhydryl of the prosthetic group.

It localises to the cytoplasm. Its pathway is lipid metabolism; fatty acid biosynthesis. Carrier of the growing fatty acid chain in fatty acid biosynthesis. The protein is Acyl carrier protein of Pasteurella multocida (strain Pm70).